The chain runs to 319 residues: Zinc metalloproteinase/disintegrin (319 aa).

Residues 1 to 28 (EDEAPKMCGVTQNWESYEPIKKASQSNL) constitute a propeptide that is removed on maturation. The 197-residue stretch at 34–230 (RYIELVIVAD…QKPQCILNKP (197 aa)) folds into the Peptidase M12B domain. Ca(2+)-binding residues include Glu37 and Asp121. Cystine bridges form between Cys145/Cys225, Cys185/Cys209, and Cys187/Cys192. Zn(2+) is bound at residue His170. Glu171 is a catalytic residue. The Zn(2+) site is built by His174 and His180. Ca(2+) contacts are provided by Cys225 and Asn228. The propeptide occupies 231–246 (LRTDTVSTPVSGNELL). The Disintegrin domain occupies 238-319 (TPVSGNELLE…AGCPRNPFHA (82 aa)). 6 cysteine pairs are disulfide-bonded: Cys252/Cys267, Cys254/Cys262, Cys261/Cys284, Cys275/Cys281, Cys280/Cys305, and Cys293/Cys312. The short motif at 297–299 (RGD) is the Cell attachment site element.

It belongs to the venom metalloproteinase (M12B) family. P-II subfamily. P-IIa sub-subfamily. Monomer. Zn(2+) serves as cofactor. As to expression, expressed by the venom gland.

It localises to the secreted. With respect to regulation, excess of calcium ions significantly suppress the autoproteolysis of the enzyme. Its function is as follows. metalloproteinase that impairs hemostasis in the envenomed animal. Shows autoproteolysis dependent on pH and temperature. Does not show hemorrhagic activity. In terms of biological role, inhibits platelet aggregation induced by ADP (IC(50) is 200 nM), collagen (IC(50) is 500 nM), thrombin and epinephrin (IC(50) is 300 nM). Does not inhibit aggregation induced by ristocetin. Inhibits platelet aggregation induced by ADP (IC(50) is 100 nM), collagen (IC(50) is 500 nM), thrombin and epinephrin (IC(50) is 300 nM). Does not inhibit aggregation induced by ristocetin. Significantly inhibits angiogenesis both in vivo and in vitro. The protein is Zinc metalloproteinase/disintegrin of Gloydius brevicauda (Korean slamosa snake).